Reading from the N-terminus, the 335-residue chain is Ketol-acid reductoisomerase (NADP(+)) (335 aa).

The KARI N-terminal Rossmann domain maps to 5–185 (SKIYTDKDSN…GATRAGVIPT (181 aa)). NADP(+) is bound by residues 28–31 (YGSQ), Ser-56, and 86–89 (DMVQ). His-111 is an active-site residue. Residue Gly-137 coordinates NADP(+). Residues 186 to 331 (TFKEETETDL…NQLKDLIQKG (146 aa)) form the KARI C-terminal knotted domain. Mg(2+)-binding residues include Asp-194, Glu-198, Glu-230, and Glu-234. Ser-255 contacts substrate.

Belongs to the ketol-acid reductoisomerase family. Requires Mg(2+) as cofactor.

It catalyses the reaction (2R)-2,3-dihydroxy-3-methylbutanoate + NADP(+) = (2S)-2-acetolactate + NADPH + H(+). The enzyme catalyses (2R,3R)-2,3-dihydroxy-3-methylpentanoate + NADP(+) = (S)-2-ethyl-2-hydroxy-3-oxobutanoate + NADPH + H(+). The protein operates within amino-acid biosynthesis; L-isoleucine biosynthesis; L-isoleucine from 2-oxobutanoate: step 2/4. It functions in the pathway amino-acid biosynthesis; L-valine biosynthesis; L-valine from pyruvate: step 2/4. In terms of biological role, involved in the biosynthesis of branched-chain amino acids (BCAA). Catalyzes an alkyl-migration followed by a ketol-acid reduction of (S)-2-acetolactate (S2AL) to yield (R)-2,3-dihydroxy-isovalerate. In the isomerase reaction, S2AL is rearranged via a Mg-dependent methyl migration to produce 3-hydroxy-3-methyl-2-ketobutyrate (HMKB). In the reductase reaction, this 2-ketoacid undergoes a metal-dependent reduction by NADPH to yield (R)-2,3-dihydroxy-isovalerate. This is Ketol-acid reductoisomerase (NADP(+)) from Saccharolobus islandicus (strain Y.G.57.14 / Yellowstone #1) (Sulfolobus islandicus).